Reading from the N-terminus, the 424-residue chain is Histidine--tRNA ligase (424 aa).

Belongs to the class-II aminoacyl-tRNA synthetase family. In terms of assembly, homodimer.

The protein localises to the cytoplasm. It catalyses the reaction tRNA(His) + L-histidine + ATP = L-histidyl-tRNA(His) + AMP + diphosphate + H(+). The polypeptide is Histidine--tRNA ligase (Escherichia coli O139:H28 (strain E24377A / ETEC)).